A 556-amino-acid polypeptide reads, in one-letter code: MLRSAAITKGTQRSPNRAMLRAVGFGDEDFNKPIIGIANGYSTITPCNIGLNDLARRSEEAARQAGAMPQMFGTITVSDGISMGTEGMKYSLVSREVIADSIETACNAQSMDGVLAIGGCDKNMPGAMIALARMNIPGVFVYGGTIKPGKLADRDLTVVSAFEAVGQHASGKINEEQLTAIEKNACPGAGSCGGMFTANTMSAAIETLGLSLPYSSTMAAEDEEKANSAARSAEVLVDAIKANICPRDLLTKNAFENAISVVMAVGGSTNAVLHLLAIARSAGVDLCIDDFERIRQRVPVICDLKPSGRYVTVDLHNAGGIPQVMKQLLDAGLLHGDCRNVEGKTLRELLKDVPSEPSAEQDVIHPLSKPVYAKGHLAILKGNLASEGCVAKISGIKTPVLTGPARVFESEEACLAAILNNKVKAGDVVVIRNEGPVGGPGMREMLAPTSAIVGEDLGDKVALITDGRFSGGTYGLVVGHVAPEAAVGGMIGLVQEGDSITIDANQLLIQLNVEKDELERRSSAWEKTQPRYQTGVLGKYARMVSSASNGAVTDQP.

A [2Fe-2S] cluster-binding site is contributed by Cys47. Asp79 serves as a coordination point for Mg(2+). Cys120 serves as a coordination point for [2Fe-2S] cluster. 2 residues coordinate Mg(2+): Asp121 and Lys122. An N6-carboxylysine modification is found at Lys122. Cys192 lines the [2Fe-2S] cluster pocket. Position 444 (Glu444) interacts with Mg(2+). Residue Ser470 is the Proton acceptor of the active site.

This sequence belongs to the IlvD/Edd family. In terms of assembly, homodimer. [2Fe-2S] cluster is required as a cofactor. It depends on Mg(2+) as a cofactor.

The enzyme catalyses (2R)-2,3-dihydroxy-3-methylbutanoate = 3-methyl-2-oxobutanoate + H2O. It catalyses the reaction (2R,3R)-2,3-dihydroxy-3-methylpentanoate = (S)-3-methyl-2-oxopentanoate + H2O. The protein operates within amino-acid biosynthesis; L-isoleucine biosynthesis; L-isoleucine from 2-oxobutanoate: step 3/4. It participates in amino-acid biosynthesis; L-valine biosynthesis; L-valine from pyruvate: step 3/4. Its function is as follows. Functions in the biosynthesis of branched-chain amino acids. Catalyzes the dehydration of (2R,3R)-2,3-dihydroxy-3-methylpentanoate (2,3-dihydroxy-3-methylvalerate) into 2-oxo-3-methylpentanoate (2-oxo-3-methylvalerate) and of (2R)-2,3-dihydroxy-3-methylbutanoate (2,3-dihydroxyisovalerate) into 2-oxo-3-methylbutanoate (2-oxoisovalerate), the penultimate precursor to L-isoleucine and L-valine, respectively. The polypeptide is Dihydroxy-acid dehydratase (Prochlorococcus marinus (strain MIT 9313)).